A 177-amino-acid polypeptide reads, in one-letter code: UPF0114 protein HPAG1_0183 (177 aa).

A run of 4 helical transmembrane segments spans residues 15 to 35 (WLLA…GYVF), 54 to 74 (LVLS…VLMV), 102 to 122 (FNAL…IFLL), and 145 to 165 (PIFW…LAAV).

It belongs to the UPF0114 family.

The protein resides in the cell membrane. This Helicobacter pylori (strain HPAG1) protein is UPF0114 protein HPAG1_0183.